The primary structure comprises 417 residues: Maltodextrin-binding protein MdxE (417 aa).

The first 22 residues, 1–22 (MVLLKKGFAILAASFLAIGLAA), serve as a signal peptide directing secretion. Cysteine 23 carries the N-palmitoyl cysteine lipid modification. Cysteine 23 is lipidated: S-diacylglycerol cysteine.

It belongs to the bacterial solute-binding protein 1 family. As to quaternary structure, the complex is composed of two ATP-binding proteins (MsmX), two transmembrane proteins (MdxF and MdxG) and a solute-binding protein (MdxE).

The protein resides in the cell membrane. Inhibited by glucose and lactose. Part of the ABC transporter complex involved in maltodextrin import. Binds maltodextrin. Can also bind maltose with low affinity, but is not involved in its uptake. This Bacillus subtilis (strain 168) protein is Maltodextrin-binding protein MdxE (mdxE).